We begin with the raw amino-acid sequence, 160 residues long: Phosphopantetheine adenylyltransferase (160 aa).

Serine 9 is a binding site for substrate. ATP-binding positions include 9–10 (SF) and histidine 17. Lysine 41, valine 73, and lysine 87 together coordinate substrate. ATP is bound by residues 88–90 (GLR), glutamate 98, and 122–128 (YSFVSSS).

The protein belongs to the bacterial CoaD family. Homohexamer. Mg(2+) serves as cofactor.

Its subcellular location is the cytoplasm. It catalyses the reaction (R)-4'-phosphopantetheine + ATP + H(+) = 3'-dephospho-CoA + diphosphate. Its pathway is cofactor biosynthesis; coenzyme A biosynthesis; CoA from (R)-pantothenate: step 4/5. Its function is as follows. Reversibly transfers an adenylyl group from ATP to 4'-phosphopantetheine, yielding dephospho-CoA (dPCoA) and pyrophosphate. This Mycobacterium avium (strain 104) protein is Phosphopantetheine adenylyltransferase.